The chain runs to 256 residues: MLRIADKTFDSHLVTGTGKFASSQLMVEAIRASGSQLVTLAMKRVDLRQHNDAILEPLIAAGVTLLPNTSGAKTAEEAIFAAHLAREALGTNWLKLEIHPDARWLLPDPIETLKAAETLVQQGFVVLPYCGADPVLCKRLEEVGCAAVMPLGAPIGSNQGLETRAMLEIIIQQATVPVVVDAGIGVPSHAAQALEMGTDAVLVNTAIAVADDPVNMAKAFRLAVEAGLLARQSGPGSRSYFAHATSPLTGFLEASV.

Lysine 95 (schiff-base intermediate with DXP) is an active-site residue. Residues glycine 156, 182 to 183, and 204 to 205 contribute to the 1-deoxy-D-xylulose 5-phosphate site; these read AG and NT.

It belongs to the ThiG family. Homotetramer. Forms heterodimers with either ThiH or ThiS.

It localises to the cytoplasm. The catalysed reaction is [ThiS sulfur-carrier protein]-C-terminal-Gly-aminoethanethioate + 2-iminoacetate + 1-deoxy-D-xylulose 5-phosphate = [ThiS sulfur-carrier protein]-C-terminal Gly-Gly + 2-[(2R,5Z)-2-carboxy-4-methylthiazol-5(2H)-ylidene]ethyl phosphate + 2 H2O + H(+). The protein operates within cofactor biosynthesis; thiamine diphosphate biosynthesis. Catalyzes the rearrangement of 1-deoxy-D-xylulose 5-phosphate (DXP) to produce the thiazole phosphate moiety of thiamine. Sulfur is provided by the thiocarboxylate moiety of the carrier protein ThiS. In vitro, sulfur can be provided by H(2)S. This is Thiazole synthase from Shigella dysenteriae serotype 1 (strain Sd197).